The sequence spans 151 residues: Ribosome maturation factor RimP (151 aa).

The protein belongs to the RimP family.

It localises to the cytoplasm. In terms of biological role, required for maturation of 30S ribosomal subunits. The sequence is that of Ribosome maturation factor RimP from Hydrogenovibrio crunogenus (strain DSM 25203 / XCL-2) (Thiomicrospira crunogena).